The primary structure comprises 99 residues: Putative protein adenylyltransferase MJ0141 (99 aa).

The GSX(10)DXD motif signature appears at 29–43 (GSYARGDYDEESDVD). Positions 41 and 43 each coordinate Mg(2+).

This sequence belongs to the MntA antitoxin family. Requires Mg(2+) as cofactor.

It carries out the reaction L-tyrosyl-[protein] + ATP = O-(5'-adenylyl)-L-tyrosyl-[protein] + diphosphate. The enzyme catalyses O-(5'-adenylyl)-L-tyrosyl-[protein] + ATP = O-[5'-(adenylyl-(5'-&gt;3')-adenylyl)]-L-tyrosyl-[protein] + diphosphate. Functionally, putative antitoxin component of a putative type VII toxin-antitoxin (TA) system. Its cognate toxin might be MF0142, which it might AMPylate. In Methanocaldococcus jannaschii (strain ATCC 43067 / DSM 2661 / JAL-1 / JCM 10045 / NBRC 100440) (Methanococcus jannaschii), this protein is Putative protein adenylyltransferase MJ0141.